The following is a 153-amino-acid chain: Ribosome maturation factor RimP (153 aa).

It belongs to the RimP family.

It is found in the cytoplasm. Required for maturation of 30S ribosomal subunits. The polypeptide is Ribosome maturation factor RimP (Picosynechococcus sp. (strain ATCC 27264 / PCC 7002 / PR-6) (Agmenellum quadruplicatum)).